We begin with the raw amino-acid sequence, 408 residues long: MSLNNLSNSYNQYLAQESHQILRHLFLNKQYSPLVKRDDDSSATVTCGGDANEFNEYGHLGYRIGAIFVILATSLIGMNLPLVLSKITKNRPNVYIEYLYLFARYFGSGVILATAFIHLLAPACNKLYDPCLDDLFGGYDWAPGICLISCWFILLLEVLLNRYVEWRFGMEIGDHHGPTLGAKQHSHSHEDGAHGVHEHPVYDIEECADGVEHECVKDDLEEVKLEPYTNTDSTDLTTKEEARSFLLKQQLTAFIILESSIILHSVIIGLTTAVSGEEFKTLFPVIIFHQAFEGCGLGSRLAGMAWGPKTAWVPWVLGVIYSLVTPIGMAAGLGVREHWDPLAHGSYAAQGVLDAISSGILVYAGLVELLAHDFLFSPERERNWYKLIYLLACSMAGTGVMALLGKWA.

A run of 3 helical transmembrane segments spans residues 64–84 (IGAIFVILATSLIGMNLPLVL), 101–121 (LFARYFGSGVILATAFIHLLA), and 141–161 (WAPGICLISCWFILLLEVLLN). 2 positions are modified to phosphothreonine: T234 and T237. 5 consecutive transmembrane segments (helical) span residues 254–274 (FIILESSIILHSVIIGLTTAV), 279–299 (FKTLFPVIIFHQAFEGCGLGS), 315–335 (WVLGVIYSLVTPIGMAAGLGV), 351–371 (GVLDAISSGILVYAGLVELLA), and 387–407 (LIYLLACSMAGTGVMALLGKW).

The protein belongs to the ZIP transporter (TC 2.A.5) family.

The protein localises to the endoplasmic reticulum membrane. High-affinity zinc transport protein. Regulates intracellular zinc levels. This Schizosaccharomyces pombe (strain 972 / ATCC 24843) (Fission yeast) protein is Zinc-regulated transporter 1 (zrt1).